The primary structure comprises 1523 residues: Lysophospholipase nte1 (1523 aa).

Over 1 to 66 (MADGVTLVDS…LPPVPTTMAG (66 aa)) the chain is Cytoplasmic. The helical transmembrane segment at 67–87 (WIGWVFSFFFQVIPSVLYWVI) threads the bilayer. Residues 88 to 109 (TFSTITLPTWLFTLFSMSLTFT) are Lumenal-facing. A helical membrane pass occupies residues 110–130 (MNFTTLLLIVLAMVSTISWFI). Over 131-1523 (RYRFLNMYSR…RTMAPRRASI (1393 aa)) the chain is Cytoplasmic. 2 disordered regions span residues 309–384 (VPNS…KSVH) and 524–545 (RAATVVTPESAPAEHDTYGVSP). The segment covering 370–382 (ESRKHSSRKRRKS) has biased composition (basic residues). Residues 681 to 800 (GGTS…GAVA) and 841 to 961 (RLTS…IAQR) contribute to the a nucleoside 3',5'-cyclic phosphate site. A PNPLA domain is found at 1220–1384 (LVLGGGGARG…IDNLTVDHMK (165 aa)). The GXGXXG motif lies at 1224 to 1229 (GGGARG). Positions 1251–1255 (GTSIG) match the GXSXG motif. Catalysis depends on Ser1253, which acts as the Nucleophile. Asp1371 (proton acceptor) is an active-site residue. Residues 1371-1373 (DGG) carry the DGA/G motif. Residues 1502-1523 (LPEETEEKKKLQRTMAPRRASI) are disordered.

This sequence belongs to the NTE family.

The protein resides in the endoplasmic reticulum membrane. The enzyme catalyses a 1-acyl-sn-glycero-3-phosphocholine + H2O = sn-glycerol 3-phosphocholine + a fatty acid + H(+). With respect to regulation, inhibited by organophosphorus esters. In terms of biological role, intracellular phospholipase B that catalyzes the double deacylation of phosphatidylcholine (PC) to glycerophosphocholine (GroPCho). Plays an important role in membrane lipid homeostasis. Responsible for the rapid PC turnover in response to inositol, elevated temperatures, or when choline is present in the growth medium. This Neosartorya fischeri (strain ATCC 1020 / DSM 3700 / CBS 544.65 / FGSC A1164 / JCM 1740 / NRRL 181 / WB 181) (Aspergillus fischerianus) protein is Lysophospholipase nte1 (nte1).